The following is a 637-amino-acid chain: Threonine--tRNA ligase (637 aa).

One can recognise a TGS domain in the interval 1-61 (MPNVKLPDGN…KEDCSLIIVT (61 aa)). The catalytic stretch occupies residues 242–533 (DHRKLGKALD…LIEHYAGKLP (292 aa)). Zn(2+)-binding residues include cysteine 333, histidine 384, and histidine 510.

Belongs to the class-II aminoacyl-tRNA synthetase family. As to quaternary structure, homodimer. Zn(2+) serves as cofactor.

Its subcellular location is the cytoplasm. It catalyses the reaction tRNA(Thr) + L-threonine + ATP = L-threonyl-tRNA(Thr) + AMP + diphosphate + H(+). Its function is as follows. Catalyzes the attachment of threonine to tRNA(Thr) in a two-step reaction: L-threonine is first activated by ATP to form Thr-AMP and then transferred to the acceptor end of tRNA(Thr). Also edits incorrectly charged L-seryl-tRNA(Thr). The protein is Threonine--tRNA ligase of Legionella pneumophila (strain Paris).